Consider the following 198-residue polypeptide: Recombination protein RecR (198 aa).

Residues 57–72 (CSVCGHITENDPCYIC) form a C4-type zinc finger. The Toprim domain occupies 80–175 (SVICVVEDDK…KVTRLAQGLS (96 aa)).

Belongs to the RecR family.

Functionally, may play a role in DNA repair. It seems to be involved in an RecBC-independent recombinational process of DNA repair. It may act with RecF and RecO. This is Recombination protein RecR from Staphylococcus epidermidis (strain ATCC 35984 / DSM 28319 / BCRC 17069 / CCUG 31568 / BM 3577 / RP62A).